A 559-amino-acid polypeptide reads, in one-letter code: Formate--tetrahydrofolate ligase (559 aa).

68–75 provides a ligand contact to ATP; sequence TPAGEGKT.

This sequence belongs to the formate--tetrahydrofolate ligase family.

The catalysed reaction is (6S)-5,6,7,8-tetrahydrofolate + formate + ATP = (6R)-10-formyltetrahydrofolate + ADP + phosphate. It functions in the pathway one-carbon metabolism; tetrahydrofolate interconversion. The sequence is that of Formate--tetrahydrofolate ligase from Rhizobium johnstonii (strain DSM 114642 / LMG 32736 / 3841) (Rhizobium leguminosarum bv. viciae).